Consider the following 480-residue polypeptide: MNILSVASEVYPLVKTGGLADVVGALPSALLPHGVRTRTLVPGYPSVLKKLKKKKPVGRFDNLFGHPATVLAAEVNGVDLLVLDQPALYARDGGPYLDSTGRDYPDNFRRFAALSLAAAEIAGNGIIPNWKPDIVHVHDWQTALTPVYMRFGPAPDLPTVMTIHNIAFQGQFGASVFPELALPPDAFSTQFVEYYGDVGFLKGGLQTASAITTVSPSYAQEILTPEFGMGLDGLLSSRVADLTGIVNGIDGETWDPQTDPHIPAHYGPGTLKRRAGNRKALEERFGLEKGPGPIFCVISRLTWQKGMDLVAEAADDIVALGGKLVVLGSGDPALESALMAAASRNRGHIGMVTGYDEPLSHLMQAGADAILIPSRFEPCGLTQLYGLRYGCVPVVARTGGLTDTIIDANEAALSAKCATGFHFLPVTTDGLRLAIRRVLRAYNEPKLWARLQYQGMKSDVSWAKSAERYVSLYSALLAKG.

Lys15 is a binding site for ADP-alpha-D-glucose.

This sequence belongs to the glycosyltransferase 1 family. Bacterial/plant glycogen synthase subfamily.

It carries out the reaction [(1-&gt;4)-alpha-D-glucosyl](n) + ADP-alpha-D-glucose = [(1-&gt;4)-alpha-D-glucosyl](n+1) + ADP + H(+). It participates in glycan biosynthesis; glycogen biosynthesis. In terms of biological role, synthesizes alpha-1,4-glucan chains using ADP-glucose. This Rhizobium meliloti (strain 1021) (Ensifer meliloti) protein is Glycogen synthase 1 (glgA1).